A 242-amino-acid chain; its full sequence is MQQFEEVRTILEKAKKITVLTGAGASTESGIPDFRSANGLYADANVEMYLSRGYYNRSPKEFWKHYKEIFQINTFHQYKPNRGHRFLAELEEQGKDITILTQNIDGLHQVGGSKHVIDLHGTLQTAHCPKCKMGYDLQYMIDHEVPRCEKCNFILNPDVVLYGDTLPQYQNAIKRLYETDVLIVMGTSLKVQPVASFPQIAKREVGATTILVNEELTGQEYNFDYVFQNKIGEFVEGLSSIK.

A Deacetylase sirtuin-type domain is found at 1–242 (MQQFEEVRTI…EFVEGLSSIK (242 aa)). 8 residues coordinate NAD(+): Ala-23, Thr-27, Phe-34, Arg-35, Gln-102, Ile-104, Asp-105, and His-120. Position 34 (Phe-34) interacts with nicotinamide. Nicotinamide is bound by residues Ile-104 and Asp-105. The active-site Proton acceptor is the His-120. Positions 128, 131, 148, and 151 each coordinate Zn(2+). Residues Thr-187, Ser-188, Asn-213, and Ile-231 each contribute to the NAD(+) site.

It belongs to the sirtuin family. Class U subfamily. The cofactor is Zn(2+).

It is found in the cytoplasm. It catalyses the reaction N(6)-acetyl-L-lysyl-[protein] + NAD(+) + H2O = 2''-O-acetyl-ADP-D-ribose + nicotinamide + L-lysyl-[protein]. In terms of biological role, NAD-dependent protein deacetylase which modulates the activities of several enzymes which are inactive in their acetylated form. The protein is NAD-dependent protein deacetylase of Bacillus anthracis.